The following is a 558-amino-acid chain: N-acetylglucosamine-6-O-sulfatase (558 aa).

3-oxoalanine (Ser) is present on S101.

This sequence belongs to the sulfatase family. Post-translationally, the conversion to 3-oxoalanine (also known as C-formylglycine, FGly), of a serine or cysteine residue in prokaryotes and of a cysteine residue in eukaryotes, is critical for catalytic activity.

Functionally, exosulfatase involved in the degradation of the glycosaminoglycan (GAG) heparan sulfate (HS). Catalyzes the hydrolysis of the 6-sulfate groups of the N-acetyl-D-glucosamine 6-sulfate units. GAG-specific sulfatases play a key role in the persistence of the major human gut symbiont B.thetaiotaomicron in the host gastrointestinal tract. The chain is N-acetylglucosamine-6-O-sulfatase from Bacteroides thetaiotaomicron (strain ATCC 29148 / DSM 2079 / JCM 5827 / CCUG 10774 / NCTC 10582 / VPI-5482 / E50).